A 258-amino-acid chain; its full sequence is Aquaglyceroporin (258 aa).

Residues 1–11 (MHMLFYKSYVR) lie on the Cytoplasmic side of the membrane. Residues 12–32 (EFIGEFLGTFVLMFLGEGATA) form a helical membrane-spanning segment. At 33–45 (NFHTTGLSGDWYK) the chain is on the extracellular side. Residues 46–66 (LCLGWGLAVFFGILVSAKLSG) form a helical membrane-spanning segment. Glycerol-binding residues include G66, A67, and N70. Residues 67 to 87 (AHLNLAVSIGLSSINKFDLKK) are Cytoplasmic-facing. Residues 88 to 108 (IPVYFFAQLLGAFVGTSTVYG) traverse the membrane as a helical segment. Topologically, residues 109–135 (LYHGFISNSKIPQFAWETSRNPSISLT) are extracellular. S127 is a glycerol binding site. Residues 136-156 (GAFFNELILTGILLLVILVVV) form a helical membrane-spanning segment. Topologically, residues 157–171 (DENICGKFHILKLSS) are cytoplasmic. Residues 172–192 (VVGLIILCIGITFGGNTGFAL) form a helical membrane-spanning segment. Glycerol-binding residues include G189, F190, N193, and R196. At 193–217 (NPSRDLGSRFLSLIAYGKDTFTKDN) the chain is on the extracellular side. A helical transmembrane segment spans residues 218–238 (FYFWVPLVAPCVGSVVFCQFY). Residues 239–258 (DKVICPLVDLANNEKDGVDL) lie on the Cytoplasmic side of the membrane.

It belongs to the MIP/aquaporin (TC 1.A.8) family. As to quaternary structure, homotetramer.

It localises to the cell membrane. It carries out the reaction H2O(in) = H2O(out). It catalyses the reaction glycerol(in) = glycerol(out). The catalysed reaction is urea(in) = urea(out). The enzyme catalyses NH4(+)(in) = NH4(+)(out). It carries out the reaction methylamine(out) = methylamine(in). It catalyses the reaction formamide(out) = formamide(in). Its function is as follows. Mediates water and glycerol transport across the cell membrane. Permeable to sugar alcohols of up to five carbons and urea. Permeable to ammonia, methylamine and formamide. This Plasmodium falciparum (isolate 3D7) protein is Aquaglyceroporin.